Consider the following 44-residue polypeptide: Protein PsbN (44 aa).

A helical membrane pass occupies residues 7 to 29; that stretch reads FFTTFLGCLLLSITGYSIYVGFG.

Belongs to the PsbN family.

It is found in the plastid. Its subcellular location is the chloroplast thylakoid membrane. In terms of biological role, may play a role in photosystem I and II biogenesis. The sequence is that of Protein PsbN from Pleurastrum terricola (Filamentous green alga).